Here is a 349-residue protein sequence, read N- to C-terminus: Protein-glutamate methylesterase/protein-glutamine glutaminase (349 aa).

Residues 5–122 (RVLSVDDSAL…REGMLAYSEM (118 aa)) form the Response regulatory domain. Position 56 is a 4-aspartylphosphate (Asp56). Positions 152–344 (LLSSEKLIAI…QQMLAKISAG (193 aa)) constitute a CheB-type methylesterase domain. Residues Ser164, His190, and Asp286 contribute to the active site.

Belongs to the CheB family. In terms of processing, phosphorylated by CheA. Phosphorylation of the N-terminal regulatory domain activates the methylesterase activity.

The protein localises to the cytoplasm. It carries out the reaction [protein]-L-glutamate 5-O-methyl ester + H2O = L-glutamyl-[protein] + methanol + H(+). It catalyses the reaction L-glutaminyl-[protein] + H2O = L-glutamyl-[protein] + NH4(+). Functionally, involved in chemotaxis. Part of a chemotaxis signal transduction system that modulates chemotaxis in response to various stimuli. Catalyzes the demethylation of specific methylglutamate residues introduced into the chemoreceptors (methyl-accepting chemotaxis proteins or MCP) by CheR. Also mediates the irreversible deamidation of specific glutamine residues to glutamic acid. The sequence is that of Protein-glutamate methylesterase/protein-glutamine glutaminase from Salmonella typhi.